A 95-amino-acid polypeptide reads, in one-letter code: Aspartyl/glutamyl-tRNA(Asn/Gln) amidotransferase subunit C (95 aa).

It belongs to the GatC family. In terms of assembly, heterotrimer of A, B and C subunits.

It catalyses the reaction L-glutamyl-tRNA(Gln) + L-glutamine + ATP + H2O = L-glutaminyl-tRNA(Gln) + L-glutamate + ADP + phosphate + H(+). It carries out the reaction L-aspartyl-tRNA(Asn) + L-glutamine + ATP + H2O = L-asparaginyl-tRNA(Asn) + L-glutamate + ADP + phosphate + 2 H(+). Functionally, allows the formation of correctly charged Asn-tRNA(Asn) or Gln-tRNA(Gln) through the transamidation of misacylated Asp-tRNA(Asn) or Glu-tRNA(Gln) in organisms which lack either or both of asparaginyl-tRNA or glutaminyl-tRNA synthetases. The reaction takes place in the presence of glutamine and ATP through an activated phospho-Asp-tRNA(Asn) or phospho-Glu-tRNA(Gln). In Thermoanaerobacter pseudethanolicus (strain ATCC 33223 / 39E) (Clostridium thermohydrosulfuricum), this protein is Aspartyl/glutamyl-tRNA(Asn/Gln) amidotransferase subunit C.